Consider the following 552-residue polypeptide: DNA ligase (552 aa).

Residue E229 participates in ATP binding. K231 functions as the N6-AMP-lysine intermediate in the catalytic mechanism. Positions 236 and 283 each coordinate ATP. Mg(2+) contacts are provided by E283 and E377. ATP contacts are provided by K382 and K397.

This sequence belongs to the ATP-dependent DNA ligase family. Interacts with host TOP2A and TOP2B. Mg(2+) is required as a cofactor.

It is found in the host cytoplasm. It catalyses the reaction ATP + (deoxyribonucleotide)n-3'-hydroxyl + 5'-phospho-(deoxyribonucleotide)m = (deoxyribonucleotide)n+m + AMP + diphosphate.. DNA ligase that seals nicks in double-stranded DNA during DNA replication, DNA recombination and DNA repair. Recruits cellular topoisomerase II to sites of viral replication and assembly. This chain is DNA ligase (OPG180), found in Vaccinia virus (strain Ankara) (VACV).